Consider the following 133-residue polypeptide: UPF0047 protein Rv2556c (133 aa).

It belongs to the UPF0047 family.

The polypeptide is UPF0047 protein Rv2556c (Mycobacterium tuberculosis (strain ATCC 25618 / H37Rv)).